The chain runs to 167 residues: Lipoprotein signal peptidase (167 aa).

A run of 3 helical transmembrane segments spans residues 10–30 (LIWL…KAWV), 68–88 (WQMW…TFWL), and 98–118 (SALP…DRFL). Catalysis depends on residues aspartate 124 and aspartate 142. The chain crosses the membrane as a helical span at residues 138–158 (FNLADSAIVAGAIGIGLLSLF).

Belongs to the peptidase A8 family.

The protein localises to the cell inner membrane. The enzyme catalyses Release of signal peptides from bacterial membrane prolipoproteins. Hydrolyzes -Xaa-Yaa-Zaa-|-(S,diacylglyceryl)Cys-, in which Xaa is hydrophobic (preferably Leu), and Yaa (Ala or Ser) and Zaa (Gly or Ala) have small, neutral side chains.. The protein operates within protein modification; lipoprotein biosynthesis (signal peptide cleavage). Functionally, this protein specifically catalyzes the removal of signal peptides from prolipoproteins. The polypeptide is Lipoprotein signal peptidase (Xylella fastidiosa (strain M23)).